A 517-amino-acid polypeptide reads, in one-letter code: Splicing factor U2AF 59 kDa subunit (517 aa).

A compositionally biased stretch (low complexity) spans Met1 to Arg13. A disordered region spans residues Met1–Ile112. The segment covering Asp20–Ser89 has biased composition (basic and acidic residues). 2 consecutive RRM domains span residues Asp310 to Val388 and Arg418 to Glu509.

Belongs to the splicing factor SR family. Forms a heterodimer with the U2AF small subunit. Can also form a homodimer. U2AF large subunit (U2AF59), U2AF small subunit (U2AF23) and SF1 (bpb1) interact to form a complex required for complex A formation. Interacts with wat1/pop3.

It localises to the nucleus. Its function is as follows. Necessary for the splicing of pre-mRNA. The SF1-U2AF59-U2AF23 complex has a role in the recognition of the branch site (5'-UACUAAC-3'), the pyrimidine tract and the 3'-splice site at the 3'-end of introns. The protein is Splicing factor U2AF 59 kDa subunit (prp2) of Schizosaccharomyces pombe (strain 972 / ATCC 24843) (Fission yeast).